The sequence spans 107 residues: UPF0145 protein Ent638_1382 (107 aa).

This sequence belongs to the UPF0145 family.

The sequence is that of UPF0145 protein Ent638_1382 from Enterobacter sp. (strain 638).